A 130-amino-acid chain; its full sequence is Serum amyloid A-4 protein (130 aa).

Positions 1 to 18 (MRLATVIVLCSLFLGVSG) are cleaved as a signal peptide. The disordered stretch occupies residues 109–130 (EEWGRSGKNPNHFRPEGLPEKF). Positions 121-130 (FRPEGLPEKF) are enriched in basic and acidic residues.

This sequence belongs to the SAA family. In terms of assembly, apolipoprotein of the HDL complex. As to expression, expressed by the liver; secreted in plasma.

The protein resides in the secreted. Major acute phase reactant. The sequence is that of Serum amyloid A-4 protein from Mus musculus (Mouse).